The primary structure comprises 257 residues: UPF0246 protein BF4021 (257 aa).

Belongs to the UPF0246 family.

This Bacteroides fragilis (strain YCH46) protein is UPF0246 protein BF4021.